The following is an 88-amino-acid chain: MANTPSARKAVRKVAARTQVNKARRSRVRTFMRKFDDALAGGDKASAEIAFKNFEPEIMRAVSKGVFHKNTAARKVSRLAKRLKALSV.

Belongs to the bacterial ribosomal protein bS20 family.

Functionally, binds directly to 16S ribosomal RNA. The polypeptide is Small ribosomal subunit protein bS20 (Bartonella tribocorum (strain CIP 105476 / IBS 506)).